The primary structure comprises 130 residues: Large ribosomal subunit protein uL14 (130 aa).

The protein belongs to the universal ribosomal protein uL14 family. Part of the 50S ribosomal subunit. Forms a cluster with proteins L3 and L19. In the 70S ribosome, L14 and L19 interact and together make contacts with the 16S rRNA in bridges B5 and B8.

Functionally, binds to 23S rRNA. Forms part of two intersubunit bridges in the 70S ribosome. This Leptospira interrogans serogroup Icterohaemorrhagiae serovar copenhageni (strain Fiocruz L1-130) protein is Large ribosomal subunit protein uL14.